Reading from the N-terminus, the 132-residue chain is Small ribosomal subunit protein uS8 (132 aa).

It belongs to the universal ribosomal protein uS8 family. In terms of assembly, part of the 30S ribosomal subunit. Contacts proteins S5 and S12.

One of the primary rRNA binding proteins, it binds directly to 16S rRNA central domain where it helps coordinate assembly of the platform of the 30S subunit. In Ligilactobacillus salivarius (strain UCC118) (Lactobacillus salivarius), this protein is Small ribosomal subunit protein uS8.